A 119-amino-acid polypeptide reads, in one-letter code: Large ribosomal subunit protein uL18 (119 aa).

The tract at residues 1 to 22 (MGHVEKVARRHKIKTRSKARGQ) is disordered. The segment covering 8-19 (ARRHKIKTRSKA) has biased composition (basic residues).

Belongs to the universal ribosomal protein uL18 family. Part of the 50S ribosomal subunit; part of the 5S rRNA/L5/L18/L25 subcomplex. Contacts the 5S and 23S rRNAs.

This is one of the proteins that bind and probably mediate the attachment of the 5S RNA into the large ribosomal subunit, where it forms part of the central protuberance. The chain is Large ribosomal subunit protein uL18 from Chlorobium phaeobacteroides (strain BS1).